A 256-amino-acid chain; its full sequence is Hydroxyacylglutathione hydrolase (256 aa).

Histidine 54, histidine 56, aspartate 58, histidine 59, histidine 113, aspartate 136, and histidine 174 together coordinate Zn(2+).

This sequence belongs to the metallo-beta-lactamase superfamily. Glyoxalase II family. As to quaternary structure, monomer. It depends on Zn(2+) as a cofactor.

The enzyme catalyses an S-(2-hydroxyacyl)glutathione + H2O = a 2-hydroxy carboxylate + glutathione + H(+). Its pathway is secondary metabolite metabolism; methylglyoxal degradation; (R)-lactate from methylglyoxal: step 2/2. Thiolesterase that catalyzes the hydrolysis of S-D-lactoyl-glutathione to form glutathione and D-lactic acid. The sequence is that of Hydroxyacylglutathione hydrolase from Cyanothece sp. (strain PCC 7425 / ATCC 29141).